Reading from the N-terminus, the 53-residue chain is Large ribosomal subunit protein bL33 (53 aa).

Belongs to the bacterial ribosomal protein bL33 family.

The chain is Large ribosomal subunit protein bL33 from Ureaplasma parvum serovar 3 (strain ATCC 27815 / 27 / NCTC 11736).